Consider the following 167-residue polypeptide: UPF0262 protein Nwi_0248 (167 aa).

Belongs to the UPF0262 family.

The protein is UPF0262 protein Nwi_0248 of Nitrobacter winogradskyi (strain ATCC 25391 / DSM 10237 / CIP 104748 / NCIMB 11846 / Nb-255).